We begin with the raw amino-acid sequence, 359 residues long: Peptide chain release factor 1 (359 aa).

Q236 is modified (N5-methylglutamine).

Belongs to the prokaryotic/mitochondrial release factor family. Methylated by PrmC. Methylation increases the termination efficiency of RF1.

The protein localises to the cytoplasm. Functionally, peptide chain release factor 1 directs the termination of translation in response to the peptide chain termination codons UAG and UAA. The polypeptide is Peptide chain release factor 1 (Streptococcus pneumoniae serotype 2 (strain D39 / NCTC 7466)).